The chain runs to 207 residues: ATP synthase subunit b 2 (207 aa).

Residues 53 to 72 (TYASQLLWLVITFGVFYLLM) form a helical membrane-spanning segment.

Belongs to the ATPase B chain family. In terms of assembly, F-type ATPases have 2 components, F(1) - the catalytic core - and F(0) - the membrane proton channel. F(1) has five subunits: alpha(3), beta(3), gamma(1), delta(1), epsilon(1). F(0) has three main subunits: a(1), b(2) and c(10-14). The alpha and beta chains form an alternating ring which encloses part of the gamma chain. F(1) is attached to F(0) by a central stalk formed by the gamma and epsilon chains, while a peripheral stalk is formed by the delta and b chains.

It is found in the cell inner membrane. F(1)F(0) ATP synthase produces ATP from ADP in the presence of a proton or sodium gradient. F-type ATPases consist of two structural domains, F(1) containing the extramembraneous catalytic core and F(0) containing the membrane proton channel, linked together by a central stalk and a peripheral stalk. During catalysis, ATP synthesis in the catalytic domain of F(1) is coupled via a rotary mechanism of the central stalk subunits to proton translocation. In terms of biological role, component of the F(0) channel, it forms part of the peripheral stalk, linking F(1) to F(0). The b'-subunit is a diverged and duplicated form of b found in plants and photosynthetic bacteria. This Rhizobium etli (strain ATCC 51251 / DSM 11541 / JCM 21823 / NBRC 15573 / CFN 42) protein is ATP synthase subunit b 2 (atpF2).